A 350-amino-acid chain; its full sequence is (RS)-norcoclaurine 6-O-methyltransferase (350 aa).

M166 contacts S-adenosyl-L-methionine. D169 contributes to the substrate binding site. S-adenosyl-L-methionine contacts are provided by residues T170, G195, D218, 238-239 (DM), and K252. Residues 253 to 257 (CILHD) and D306 each bind substrate. The Proton acceptor role is filled by H256.

This sequence belongs to the class I-like SAM-binding methyltransferase superfamily. Cation-independent O-methyltransferase family. COMT subfamily. Homodimer. Expressed in leaf primordia of rhizomes and root endodermis.

It catalyses the reaction (S)-norcoclaurine + S-adenosyl-L-methionine = (S)-coclaurine + S-adenosyl-L-homocysteine + H(+). The enzyme catalyses norcoclaurine + S-adenosyl-L-methionine = coclaurine + S-adenosyl-L-homocysteine + H(+). Its activity is regulated as follows. Inhibited by sanguinarine. Its function is as follows. Involved in the biosynthesis of coclaurine, a precursor of benzylisoquinoline alkaloids. Catalyzes the transfer of the S-methyl group of S-adenosyl-L-methionine (AdoMet) to the 6-hydroxyl group of norcoclaurine to form coclaurine. The polypeptide is (RS)-norcoclaurine 6-O-methyltransferase (Thalictrum flavum subsp. glaucum (Yellow meadow rue)).